We begin with the raw amino-acid sequence, 150 residues long: Cytochrome c oxidase subunit 5A, mitochondrial (150 aa).

A mitochondrion-targeting transit peptide spans 1–41 (MLGAALRRCAVAATTRADPRGLLHSARTPGPAVAIQSVRCY). The short motif at 2-17 (LGAALRRCAVAATTRA) is the SIFI-degron element. N6-acetyllysine is present on residues K87 and K113. At T141 the chain carries Phosphothreonine.

It belongs to the cytochrome c oxidase subunit 5A family. In terms of assembly, component of the cytochrome c oxidase (complex IV, CIV), a multisubunit enzyme composed of 14 subunits. The complex is composed of a catalytic core of 3 subunits MT-CO1, MT-CO2 and MT-CO3, encoded in the mitochondrial DNA, and 11 supernumerary subunits COX4I1 (or COX4I2), COX5A, COX5B, COX6A1 (or COX6A2), COX6B1 (or COX6B2), COX6C, COX7A2 (or COX7A1), COX7B, COX7C, COX8A and NDUFA4, which are encoded in the nuclear genome. The complex exists as a monomer or a dimer and forms supercomplexes (SCs) in the inner mitochondrial membrane with NADH-ubiquinone oxidoreductase (complex I, CI) and ubiquinol-cytochrome c oxidoreductase (cytochrome b-c1 complex, complex III, CIII), resulting in different assemblies (supercomplex SCI(1)III(2)IV(1) and megacomplex MCI(2)III(2)IV(2)). Interacts with AFG1L. Interacts with RAB5IF. In terms of processing, in response to mitochondrial stress, the precursor protein is ubiquitinated by the SIFI complex in the cytoplasm before mitochondrial import, leading to its degradation. Within the SIFI complex, UBR4 initiates ubiquitin chain that are further elongated or branched by KCMF1.

The protein resides in the mitochondrion inner membrane. It functions in the pathway energy metabolism; oxidative phosphorylation. Its function is as follows. Component of the cytochrome c oxidase, the last enzyme in the mitochondrial electron transport chain which drives oxidative phosphorylation. The respiratory chain contains 3 multisubunit complexes succinate dehydrogenase (complex II, CII), ubiquinol-cytochrome c oxidoreductase (cytochrome b-c1 complex, complex III, CIII) and cytochrome c oxidase (complex IV, CIV), that cooperate to transfer electrons derived from NADH and succinate to molecular oxygen, creating an electrochemical gradient over the inner membrane that drives transmembrane transport and the ATP synthase. Cytochrome c oxidase is the component of the respiratory chain that catalyzes the reduction of oxygen to water. Electrons originating from reduced cytochrome c in the intermembrane space (IMS) are transferred via the dinuclear copper A center (CU(A)) of subunit 2 and heme A of subunit 1 to the active site in subunit 1, a binuclear center (BNC) formed by heme A3 and copper B (CU(B)). The BNC reduces molecular oxygen to 2 water molecules using 4 electrons from cytochrome c in the IMS and 4 protons from the mitochondrial matrix. This chain is Cytochrome c oxidase subunit 5A, mitochondrial (COX5A), found in Homo sapiens (Human).